A 226-amino-acid polypeptide reads, in one-letter code: Urease accessory protein UreF (226 aa).

This sequence belongs to the UreF family. In terms of assembly, ureD, UreF and UreG form a complex that acts as a GTP-hydrolysis-dependent molecular chaperone, activating the urease apoprotein by helping to assemble the nickel containing metallocenter of UreC. The UreE protein probably delivers the nickel.

The protein localises to the cytoplasm. Its function is as follows. Required for maturation of urease via the functional incorporation of the urease nickel metallocenter. This is Urease accessory protein UreF from Janthinobacterium sp. (strain Marseille) (Minibacterium massiliensis).